A 130-amino-acid chain; its full sequence is Small ribosomal subunit protein uS11c (130 aa).

Belongs to the universal ribosomal protein uS11 family. As to quaternary structure, part of the 30S ribosomal subunit.

It is found in the plastid. Its subcellular location is the chloroplast. This chain is Small ribosomal subunit protein uS11c, found in Pinus thunbergii (Japanese black pine).